A 923-amino-acid chain; its full sequence is Inorganic phosphate transporter PHO87 (923 aa).

The SPX domain occupies 1–334; that stretch reads MRFSHFLKYN…HMNTRQELIE (334 aa). Residues 1–461 lie on the Extracellular side of the membrane; sequence MRFSHFLKYN…KLFFGKRAMK (461 aa). 2 disordered regions span residues 40–74 and 86–107; these read ETPTGDLNDDADSQTPGPIADIESNIAAGEPSSSK and FGSKTPSGSKRGDSDEKAIDGN. The segment covering 95 to 104 has biased composition (basic and acidic residues); that stretch reads KRGDSDEKAI. Residue Lys102 forms a Glycyl lysine isopeptide (Lys-Gly) (interchain with G-Cter in ubiquitin) linkage. 3 N-linked (GlcNAc...) asparagine glycosylation sites follow: Asn162, Asn202, and Asn274. Residues 462-482 form a helical membrane-spanning segment; it reads IGFIIIVTGVLLGVKTFNDPV. Topologically, residues 483–493 are cytoplasmic; the sequence is EHRCMALVECC. A helical membrane pass occupies residues 494 to 514; the sequence is AFLWASEAIPLHITGLLVPLL. Over 515–537 the chain is Extracellular; sequence TVLFRVLKDDDGKVMGAAAASTE. A helical transmembrane segment spans residues 538-558; that stretch reads ILGTMWSSTIMILLAGFTLGE. Over 559 to 583 the chain is Cytoplasmic; it reads ALSQYNVAKVLASWLLALAGTKPRN. A helical membrane pass occupies residues 584-604; the sequence is VLLMAMSVVFFLSMWISNVAS. Residues 605-627 are Extracellular-facing; the sequence is PVLTYSLLTPLLDPLDYTSPFAK. Residues 628-648 traverse the membrane as a helical segment; it reads ALVMGVALSADIGGMASPISS. Topologically, residues 649–667 are cytoplasmic; the sequence is PQNIISMQYLKPYGIGWGQ. A helical membrane pass occupies residues 668–688; the sequence is FFAVALPTGILSMLCSWALMI. Residues 689 to 707 are Extracellular-facing; sequence LTFKIGKTKLEKFKPIRTR. A helical transmembrane segment spans residues 708 to 728; that stretch reads FTIKQYFIIIVTIATILLWCV. The Cytoplasmic portion of the chain corresponds to 729–735; it reads ESQIESA. Residues 736–756 traverse the membrane as a helical segment; that stretch reads FGSSGEIAVIPIVLFFGTGLL. The Extracellular segment spans residues 757-767; that stretch reads STKDFNTFPWS. Residues 768 to 788 traverse the membrane as a helical segment; sequence IVVLAMGGIALGKAVSSSGLL. Over 789-802 the chain is Cytoplasmic; the sequence is VTIARALQKKIQND. The chain crosses the membrane as a helical span at residues 803–823; sequence GVFAILCIFGILMLVVGTFVS. Over 824–849 the chain is Extracellular; it reads HTVSAIIIIPLVQEVGDKLSDPKAAP. A helical transmembrane segment spans residues 850-870; it reads ILVFGCALLASCGMGLASSGF. Over 871–898 the chain is Cytoplasmic; that stretch reads PNVTAISMTDKKGNRWLTVGAFISRGVP. Residues 899–919 traverse the membrane as a helical segment; sequence ASLLAFVCVITLGYGISSSVL. At 920–923 the chain is on the extracellular side; sequence KGST.

It belongs to the CitM (TC 2.A.11) transporter family.

The protein localises to the membrane. Functionally, involved in the uptake of inorganic phosphate. This chain is Inorganic phosphate transporter PHO87 (PHO87), found in Saccharomyces cerevisiae (strain ATCC 204508 / S288c) (Baker's yeast).